Reading from the N-terminus, the 462-residue chain is ATP synthase subunit beta (462 aa).

152–159 (GGAGVGKT) lines the ATP pocket.

The protein belongs to the ATPase alpha/beta chains family. In terms of assembly, F-type ATPases have 2 components, CF(1) - the catalytic core - and CF(0) - the membrane proton channel. CF(1) has five subunits: alpha(3), beta(3), gamma(1), delta(1), epsilon(1). CF(0) has three main subunits: a(1), b(2) and c(9-12). The alpha and beta chains form an alternating ring which encloses part of the gamma chain. CF(1) is attached to CF(0) by a central stalk formed by the gamma and epsilon chains, while a peripheral stalk is formed by the delta and b chains.

It is found in the cell inner membrane. It catalyses the reaction ATP + H2O + 4 H(+)(in) = ADP + phosphate + 5 H(+)(out). Its function is as follows. Produces ATP from ADP in the presence of a proton gradient across the membrane. The catalytic sites are hosted primarily by the beta subunits. This is ATP synthase subunit beta from Tolumonas auensis (strain DSM 9187 / NBRC 110442 / TA 4).